Consider the following 42-residue polypeptide: Potassium channel toxin gamma-KTx 1.5 (42 aa).

Disulfide bonds link Cys-5–Cys-23, Cys-11–Cys-34, Cys-20–Cys-39, and Cys-24–Cys-41.

Belongs to the ergtoxin family. Gamma-KTx 1 subfamily. In terms of tissue distribution, expressed by the venom gland.

It localises to the secreted. In terms of biological role, blocks Kv11/ERG potassium channels. This is Potassium channel toxin gamma-KTx 1.5 from Centruroides limpidus (Mexican scorpion).